Reading from the N-terminus, the 137-residue chain is uncharacterized protein (137 aa).

This is an uncharacterized protein from Rickettsia prowazekii (strain Madrid E).